Here is a 155-residue protein sequence, read N- to C-terminus: 3-hydroxyacyl-[acyl-carrier-protein] dehydratase FabZ (155 aa).

The active site involves histidine 59.

Belongs to the thioester dehydratase family. FabZ subfamily.

It is found in the cytoplasm. The enzyme catalyses a (3R)-hydroxyacyl-[ACP] = a (2E)-enoyl-[ACP] + H2O. In terms of biological role, involved in unsaturated fatty acids biosynthesis. Catalyzes the dehydration of short chain beta-hydroxyacyl-ACPs and long chain saturated and unsaturated beta-hydroxyacyl-ACPs. This chain is 3-hydroxyacyl-[acyl-carrier-protein] dehydratase FabZ, found in Bartonella quintana (strain Toulouse) (Rochalimaea quintana).